The chain runs to 551 residues: MFS-type transporter ATEG_00331 (551 aa).

A signal peptide spans 1–18 (MKAWLLVSSLCLSTFIAA). A run of 4 helical transmembrane segments spans residues 40–60 (LEFTWIGTAYLLPAAASTPPW), 71–91 (PVLMISIVVFFIGSLIGALAI), 102–122 (IQGTGGGGILGLSATVIGDVF), and 132–152 (GVLGVTWGVACGLGPIVGGAF). 2 N-linked (GlcNAc...) asparagine glycosylation sites follow: Asn-165 and Asn-178. The next 8 membrane-spanning stretches (helical) occupy residues 179–199 (LTTSVPVAGVAGALVLLFLEV), 206–228 (IIEGLLAMDWLGTITIVGATVMF), 233–255 (GYGGIAYPWNSATVVCLIVFGIG), 324–344 (VYLLPVAVTLCVASTATGLYI), 354–374 (IYFGLVMMILGHGLYINLQPY), 380–400 (IIIFQIIAGLGLGPLFQAPII), 417–437 (TVFFARDIATAMSIVFGGVIF), and 493–513 (SEWIFYTALSGAALLLSVFIS). Asn-524 is a glycosylation site (N-linked (GlcNAc...) asparagine).

This sequence belongs to the major facilitator superfamily. TCR/Tet family.

The protein resides in the membrane. In terms of biological role, MFS-type transporter; part of the gene cluster that mediates the biosynthesis of isoflavipucine. The protein is MFS-type transporter ATEG_00331 of Aspergillus terreus (strain NIH 2624 / FGSC A1156).